The following is a 342-amino-acid chain: MQNAGLSPTPSLRALGGLAMAALLSTVWLWWRLGAAPGGAPAPQPTTTILVWHWPFASQPPELPGDTCTRYGVARCRLTVNRSLLAGADAVVFHHRELQTQQARLPLAERPRGQPWVWASMESPSHTRGLGRLRGVFNWVLSYRRDSDIFVPYGRLEPREGPAPPLPAKRGLAAWVVSNFQKRQRRVQLYRQLALHLRVDVFGRAAGQPLCASCLLRAVAGYRFYLSFENSEHRDYITEKFWRNALLAGAVPVVLGPPRAAYEAVAPPDAFVHVDDFGSARELAAFLTSMNESCYRRYFAWRDRFRVRLFSDWRERFCAICARFPQLPRGQVYQDLEGWFQA.

Residues Met1–Ser11 lie on the Cytoplasmic side of the membrane. The chain crosses the membrane as a helical; Signal-anchor for type II membrane protein span at residues Leu12–Trp31. Topologically, residues Arg32–Ala342 are extracellular. Cys68 and Cys76 are disulfide-bonded. An N-linked (GlcNAc...) asparagine glycan is attached at Asn81. The cysteines at positions 211 and 214 are disulfide-linked. An N-linked (GlcNAc...) asparagine glycan is attached at Asn291. Cys318 and Cys321 are joined by a disulfide.

It belongs to the glycosyltransferase 10 family. In terms of processing, N-glycosylated. As to expression, expressed in thymus, spleen, liver and lung. Highly expressed in the thymus and lower expressed in the lung.

Its subcellular location is the membrane. The enzyme catalyses an N-acetyl-alpha-neuraminyl-(2-&gt;3)-beta-D-galactosyl-(1-&gt;4)-N-acetyl-beta-D-glucosaminyl derivative + GDP-beta-L-fucose = an alpha-Neu5Ac-(2-&gt;3)-beta-D-Gal-(1-&gt;4)-[alpha-L-Fuc-(1-&gt;3)]-beta-D-GlcNAc derivative + GDP + H(+). The catalysed reaction is a neolactoside IV(3)-alpha-NeuAc-nLc4Cer + GDP-beta-L-fucose = a neolactoside IV(3)-alpha-NeuNAc,III(3)-alpha-Fuc-nLc4Cer + GDP + H(+). It catalyses the reaction a neolactoside VI(3)-alpha-NeuNAc-nLc6Cer + GDP-beta-L-fucose = a neolactoside VI(3)-alpha-NeuAc,V(3)-alphaFuc-nLc6Cer + GDP + H(+). It carries out the reaction an alpha-Neu5Ac-(2-&gt;3)-beta-D-Gal-(1-&gt;4)-beta-D-GlcNAc-(1-&gt;3)-beta-D-Gal-(1-&gt;4)-[alpha-L-Fuc-(1-&gt;3)]-beta-D-GlcNAc derivative + GDP-beta-L-fucose = an alpha-Neu5Ac-(2-&gt;3)-beta-D-Gal-(1-&gt;4)-[alpha-L-Fuc-(1-&gt;3)]-beta-D-GlcNAc-(1-&gt;3)-beta-D-Gal-(1-&gt;4)-[alpha-L-Fuc-(1-&gt;3)]-beta-D-GlcNAc derivative + GDP + H(+). The enzyme catalyses an alpha-Neu5Ac-(2-&gt;3)-beta-D-Gal-(1-&gt;4)-beta-D-GlcNAc6S derivative + GDP-beta-L-fucose = an alpha-Neu5Ac-(2-&gt;3)-beta-D-Gal-(1-&gt;4)-[alpha-L-Fuc-(1-&gt;3)]-beta-D-GlcNAc6S derivative + GDP + H(+). The catalysed reaction is alpha-Neu5Ac-(2-&gt;3)-beta-D-Gal-(1-&gt;4)-beta-D-GlcNAc-(1-&gt;3)-beta-D-Gal-(1-&gt;4)-D-Glc + GDP-beta-L-fucose = alpha-Neu5Ac-(2-&gt;3)-beta-D-Gal-(1-&gt;4)-[alpha-L-Fuc-(1-&gt;3)]-beta-D-GlcNAc-(1-&gt;3)-beta-D-Gal-(1-&gt;4)-D-Glc + GDP + H(+). It catalyses the reaction alpha-Neu5Ac-(2-&gt;3)-beta-D-Gal-(1-&gt;4)-beta-D-GlcNAc-(1-&gt;3)-beta-D-Gal-(1-&gt;4)-[alpha-L-Fuc-(1-&gt;3)]-beta-D-GlcNAc-(1-&gt;3)-beta-D-Gal-(1-&gt;4)-beta-D-GlcNAc + GDP-beta-L-fucose = alpha-Neu5Ac-(2-&gt;3)-beta-D-Gal-(1-&gt;4)-[alpha-L-Fuc-(1-&gt;3)]-beta-D-GlcNAc-(1-&gt;3)-beta-D-Gal-(1-&gt;4)-[alpha-L-Fuc-(1-&gt;3)]-beta-D-GlcNAc-(1-&gt;3)-beta-D-Gal-(1-&gt;4)-beta-D-GlcNAc + GDP + H(+). It carries out the reaction alpha-Neu5Ac-(2-&gt;3)-beta-D-Gal-(1-&gt;4)-beta-D-GlcNAc-(1-&gt;3)-beta-D-Gal-(1-&gt;4)-beta-D-GlcNAc-(1-&gt;3)-beta-D-Gal-(1-&gt;4)-beta-D-GlcNAc + GDP-beta-L-fucose = alpha-Neu5Ac-(2-&gt;3)-beta-D-Gal-(1-&gt;4)-[alpha-L-Fuc-(1-&gt;3)]-beta-D-GlcNAc-(1-&gt;3)-beta-D-Gal-(1-&gt;4)-beta-D-GlcNAc-(1-&gt;3)-beta-D-Gal-(1-&gt;4)-beta-D-GlcNAc + GDP + H(+). The protein operates within protein modification; protein glycosylation. With respect to regulation, inhibited by NaCl. Inhibited by GDP in a concentration dependent manner, with an IC(50) value of 93 uM. Also inhibited by GMP and GTP. Inhibited by N-ethylmaleimide. Activated by poly(ethylene glycol) by enhancing the thermal stability of FUT7. Activated by Mn2+, Ca2+, and Mg2+. Both panosialin A and B inhibit activity with IC(50) values of 4.8 and 5.3 ug/ml, respectively. Inhibited by gallic acid (GA) and (-)-epigallocatechin gallate (EGCG) in a time-dependent and irreversible manner with IC(50) values of 60 and 700 nM, respectively. In terms of biological role, catalyzes the transfer of L-fucose, from a guanosine diphosphate-beta-L-fucose, to the N-acetyl glucosamine (GlcNAc) of a distal alpha2,3 sialylated lactosamine unit of a glycoprotein or a glycolipid-linked sialopolylactosamines chain through an alpha-1,3 glycosidic linkage and participates in the final fucosylation step in the biosynthesis of the sialyl Lewis X (sLe(x)), a carbohydrate involved in cell and matrix adhesion during leukocyte trafficking and fertilization. In vitro, also synthesizes sialyl-dimeric-Lex structures, from VIM-2 structures and both di-fucosylated and trifucosylated structures from mono-fucosylated precursors. However does not catalyze alpha 1-3 fucosylation when an internal alpha 1-3 fucosylation is present in polylactosamine chain and the fucosylation rate of the internal GlcNAc residues is reduced once fucose has been added to the distal GlcNAc. Also catalyzes the transfer of a fucose from GDP-beta-fucose to the 6-sulfated a(2,3)sialylated substrate to produce 6-sulfo sLex mediating significant L-selectin-dependent cell adhesion. Through sialyl-Lewis(x) biosynthesis, can control SELE- and SELP-mediated cell adhesion with leukocytes and allows leukocytes tethering and rolling along the endothelial tissue thereby enabling the leukocytes to accumulate at a site of inflammation. May enhance embryo implantation through sialyl Lewis X (sLeX)-mediated adhesion of embryo cells to endometrium. May affect insulin signaling by up-regulating the phosphorylation and expression of some signaling molecules involved in the insulin-signaling pathway through SLe(x) which is present on the glycans of the INSRR alpha subunit. The chain is Alpha-(1,3)-fucosyltransferase 7 from Bos taurus (Bovine).